Here is a 192-residue protein sequence, read N- to C-terminus: UPF0312 protein plu2095 (192 aa).

The signal sequence occupies residues 1–23 (MLKKTLLGLTAGALLLNASSALA).

Belongs to the UPF0312 family. Type 1 subfamily.

The protein resides in the periplasm. This is UPF0312 protein plu2095 from Photorhabdus laumondii subsp. laumondii (strain DSM 15139 / CIP 105565 / TT01) (Photorhabdus luminescens subsp. laumondii).